We begin with the raw amino-acid sequence, 454 residues long: tRNA-2-methylthio-N(6)-dimethylallyladenosine synthase (454 aa).

In terms of domain architecture, MTTase N-terminal spans 11-128 (KKLYIQTHGC…LPEMIETPRE (118 aa)). [4Fe-4S] cluster is bound by residues Cys-20, Cys-57, Cys-91, Cys-165, Cys-169, and Cys-172. Residues 151 to 382 (EADGATAFVS…QTRIIQQAQE (232 aa)) form the Radical SAM core domain. Positions 385–449 (RRMVGNTERV…PNSLRGVLLG (65 aa)) constitute a TRAM domain.

The protein belongs to the methylthiotransferase family. MiaB subfamily. As to quaternary structure, monomer. It depends on [4Fe-4S] cluster as a cofactor.

The protein localises to the cytoplasm. It carries out the reaction N(6)-dimethylallyladenosine(37) in tRNA + (sulfur carrier)-SH + AH2 + 2 S-adenosyl-L-methionine = 2-methylsulfanyl-N(6)-dimethylallyladenosine(37) in tRNA + (sulfur carrier)-H + 5'-deoxyadenosine + L-methionine + A + S-adenosyl-L-homocysteine + 2 H(+). Catalyzes the methylthiolation of N6-(dimethylallyl)adenosine (i(6)A), leading to the formation of 2-methylthio-N6-(dimethylallyl)adenosine (ms(2)i(6)A) at position 37 in tRNAs that read codons beginning with uridine. This Saccharophagus degradans (strain 2-40 / ATCC 43961 / DSM 17024) protein is tRNA-2-methylthio-N(6)-dimethylallyladenosine synthase.